The sequence spans 496 residues: 1-aminocyclopropane-1-carboxylate synthase 2 (496 aa).

Residues E55 and Y93 each coordinate substrate. Residue K279 is modified to N6-(pyridoxal phosphate)lysine. A phosphoserine mark is found at S483, S488, and S491.

The protein belongs to the class-I pyridoxal-phosphate-dependent aminotransferase family. In terms of assembly, homodimer and heterodimer. In vivo, the relevance of heterodimerization with other ACS enzymes is however unsure. Interacts with GRF3. Requires pyridoxal 5'-phosphate as cofactor. In terms of processing, phosphorylated on serine residue by MAP kinase (MPK6). May be processed at its C-terminus. In terms of tissue distribution, high in developing leaves and in flowers. Expressed in roots and siliques.

It catalyses the reaction S-adenosyl-L-methionine = 1-aminocyclopropane-1-carboxylate + S-methyl-5'-thioadenosine + H(+). It functions in the pathway alkene biosynthesis; ethylene biosynthesis via S-adenosyl-L-methionine; ethylene from S-adenosyl-L-methionine: step 1/2. In terms of biological role, 1-aminocyclopropane-1-carboxylate synthase (ACS) enzymes catalyze the conversion of S-adenosyl-L-methionine (SAM) into 1-aminocyclopropane-1-carboxylate (ACC), a direct precursor of ethylene. The chain is 1-aminocyclopropane-1-carboxylate synthase 2 (ACS2) from Arabidopsis thaliana (Mouse-ear cress).